Reading from the N-terminus, the 474-residue chain is Stabilizer of axonemal microtubules 1 (474 aa).

Mn stretches follow at residues 30–64 (KPCL…KGPI), 65–97 (PMEG…PSEE), 98–131 (NMDL…PCSD), 132–165 (KMEC…PASV), 166–199 (RFDN…LCNI), 200–232 (PLED…PCEI), 233–266 (PFES…GLDM), 267–299 (PFCN…PPED), 300–332 (RMDL…KKCG), 333–366 (RFEG…LPTE), 367–400 (PLDC…RGNV), and 401–434 (PVES…TFEE). The tract at residues 446–474 (VSQAGSQQSSHLSVDDSENPNQRELEVLA) is disordered. The span at 448-457 (QAGSQQSSHL) shows a compositional bias: polar residues.

It belongs to the FAM154 family. Associates with microtubules via the Mn regions. Widely expressed, with highest levels in testis. Expressed in mature spermatozoa (at protein level).

It localises to the cytoplasm. The protein resides in the cytoskeleton. The protein localises to the microtubule organizing center. It is found in the centrosome. Its subcellular location is the centriole. It localises to the cilium basal body. The protein resides in the cilium axoneme. The protein localises to the flagellum axoneme. Its function is as follows. May play a role in the regulation of cilium length. Stabilizes microtubules at low temperature. The chain is Stabilizer of axonemal microtubules 1 (SAXO1) from Homo sapiens (Human).